The primary structure comprises 447 residues: F-box only protein 5 (447 aa).

Phosphoserine occurs at positions 94 and 102. The interval 135–244 (ALETSRLYED…IGRKMGLECV (110 aa)) is interaction with EVI5. Positions 250-296 (LFRRGLRHVLATILAQLSDMDLINVSKVSTTWKKILEDDKGAFQLYS) constitute an F-box domain. The interval 261-339 (TILAQLSDMD…KSAAQTSLKK (79 aa)) is sufficient for interaction with RPS6KA2; Prevents association of CDC20 with RPS6KA2. The requires for efficient binding to CDC20 stretch occupies residues 261-409 (TILAQLSDMD…GCGFDYCTKC (149 aa)). The segment at 305 to 447 (NNNKFSPHAS…KKSKKNLRRL (143 aa)) is inhibits APC ubiquitin ligase activity. A competitively blocks access of APC substrates to the D-box coreceptor formed by FZR1 and ANAPC10 region spans residues 322–325 (RTPL). The interval 337 to 358 (LKKDAQTKLSNQGDQKGSTYSR) is disordered. Residues 343–357 (TKLSNQGDQKGSTYS) show a composition bias toward polar residues. Residues 374-422 (SLKACIRCNSPAKYDCYLQRATCKREGCGFDYCTKCLCNYHTTKDCSDG) form a ZBR-type zinc finger. Zn(2+)-binding residues include Cys378, Cys381, Cys396, Cys401, Cys406, Cys409, His414, and Cys419. An allows a rapid multiple mono-ubiquitination of the APC substrate, but strongly inhibits the slow ubiquitin chain elongation catalyzed by UBCH10 region spans residues 378-420 (CIRCNSPAKYDCYLQRATCKREGCGFDYCTKCLCNYHTTKDCS). The sufficient to suppress UBE2S activity; essential for interaction with UBE2S; competitively inhibits the rapide ubiquitin chain elongation by UBE2D1 which blocks UBE2D1 with APC; indispensable for recruitment and position of FBXO5 to the catalytic site of APC; abrogates the inhibition of ubiquitin chain assembly primarily catalyzed by UBE2S; inhibits the ubiquitination by either UBE2C or UBE2D1 stretch occupies residues 437–447 (TKKSKKNLRRL).

As to quaternary structure, part of a SCF (SKP1-cullin-F-box) protein ligase complex. Interacts with BTRC; mediates proteolysis by the SCF ubiquitin ligase complex leading to activation of APC in late mitosis and subsequent mitotic progression. Interacts with FZR1/CDH1 and the N-terminal substrate-binding domain of CDC20; prevents APC activation. Also interacts with EVI5 which blocks its phosphorylation by PLK1 and prevents its subsequent binding to BTRC and degradation. Interacts simultaneously with anaphase promoting complex (APC), through at least ANAPC2, CDC23, CDC27, the APC substrate GMNN and the APC activator FZR1. Interacts with UBE2S; interferes with the activity of UBE2S mainly by disrupting the dynamic electrostatic association between the C-terminal tail of UBE2S and ANAPC2. Interacts with RPS6KA2; cooperates to induce the metaphase arrest of early blastomeres; increases and stabilizes interaction of FBXO5 with CDC20. In terms of processing, phosphorylation by CDK2 and subsequently by PLK1 triggers degradation during early mitosis through ubiquitin-mediated proteolysis by the SCF ubiquitin ligase complex containing the F-box protein BTRC. This degradation is necessary for the activation of APC in late mitosis and subsequent mitotic progression. Phosphorylated by RPS6KA2; increases and stabilizes interaction with CDC20. Post-translationally, ubiquitinated by the SCF(BTRC) complex following phosphorylation by PLK1. Undergoes both 'Lys-11' and 'Lys-48'-linked polyubiquitination by APC-FZR1 complex leading to degradation by proteasome during G1 phase. Degraded through the SCF(BTRC) complex; degradation occurs during oocyte maturation, between germinal vesicle breakdown (GVBD) and meiosis I, and is required for the meiosis I-meiosis II transition.

It is found in the nucleus. It localises to the cytoplasm. The protein resides in the cytoskeleton. Its subcellular location is the spindle. It participates in protein modification; protein ubiquitination. Its function is as follows. Regulator of APC activity during mitotic and meiotic cell cycle. During mitotic cell cycle plays a role as both substrate and inhibitor of APC-FZR1 complex. During G1 phase, plays a role as substrate of APC-FZR1 complex E3 ligase. Then switches as an inhibitor of APC-FZR1 complex during S and G2 leading to cell-cycle commitment. As APC inhibitor, prevents the degradation of APC substrates at multiple levels: by interacting with APC and blocking access of APC substrates to the D-box coreceptor, formed by FZR1 and ANAPC10; by suppressing ubiquitin ligation and chain elongation by APC by preventing the UBE2C and UBE2S activities. Plays a role in genome integrity preservation by coordinating DNA replication with mitosis through APC inhibition in interphase to stabilize CCNA2 and GMNN in order to promote mitosis and prevent rereplication and DNA damage-induced cellular senescence. During oocyte maturation, plays a role in meiosis through inactivation of APC-FZR1 complex. Inhibits APC through RPS6KA2 interaction that increases FBXO5 affiniy for CDC20 leading to the metaphase arrest of the second meiotic division before fertilization. Controls entry into the first meiotic division through inactivation of APC-FZR1 complex. Promotes migration and osteogenic differentiation of mesenchymal stem cells. In Homo sapiens (Human), this protein is F-box only protein 5.